A 2346-amino-acid chain; its full sequence is Highly reducing polyketide synthase claI (2346 aa).

The 403-residue stretch at 10-412 folds into the Ketosynthase family 3 (KS3) domain; sequence TPAIAVVGMA…GTNCHLIVED (403 aa). Residues cysteine 183, histidine 295, and histidine 335 each act as for beta-ketoacyl synthase activity in the active site. The tract at residues 530–842 is malonyl-CoA:ACP transacylase (MAT) domain; that stretch reads IFTGQGSQWP…EYFSALKRGE (313 aa). Serine 622 functions as the For malonyltransferase activity in the catalytic mechanism. The segment at 912-1048 is N-terminal hotdog fold; it reads HDLLGSKILG…GLIRTSEEDS (137 aa). Residues 912-1213 are dehydratase (DH) domain; that stretch reads HDLLGSKILG…INGLRFSSVD (302 aa). One can recognise a PKS/mFAS DH domain in the interval 912–1218; that stretch reads HDLLGSKILG…FSSVDLGSVQ (307 aa). Histidine 944 (proton acceptor; for dehydratase activity) is an active-site residue. Residues 1060 to 1218 form a C-terminal hotdog fold region; it reads IHATPAQVWY…FSSVDLGSVQ (159 aa). Catalysis depends on aspartate 1124, which acts as the Proton donor; for dehydratase activity. The tract at residues 1633-1946 is enoyl reductase (ER) domain; that stretch reads GSLEALQWTQ…SARHIGKILI (314 aa). Positions 1972–2151 are ketoreductase (KR) domain; it reads TYLIVGGLRG…HSLDLGVVDA (180 aa). In terms of domain architecture, Carrier spans 2258–2336; sequence SQLVEKAVTL…ALAEKMVSKV (79 aa). O-(pantetheine 4'-phosphoryl)serine is present on serine 2296.

It depends on pantetheine 4'-phosphate as a cofactor.

It participates in secondary metabolite biosynthesis. Highly reducing polyketide synthase; part of the cla gene cluster that produces clavatol and ortho-quinone methide. The clavatol biosynthesis cluster cla and the terrestric acid cluster tra are both involved in the production of peniphenones and penilactones. The non-reducing PKS claF is responsible for the formation of clavatol from successive condensations of 3 malonyl-CoA units, presumably with a simple acetyl-CoA starter unit, and 2 methylation steps. The esterase claE probably collaborates with claF by catalyzing the hydrolysis of ACP-bound acyl intermediates to free the ACP from stalled intermediates. The clavatol oxidase claD then converts clavatol to hydroxyclavatol. Spontaneous dehydration of hydroxyclavatol leads to the accumulation of the highly active ortho-quinone methide. On the other hand, the PKS-NRPS hybrid traA is involved in the formation of crustosic acid, with the help of traB and traD. The polyketide synthase module (PKS) of traA is responsible for the synthesis of the polyketide backbone via the condensation of an acetyl-CoA starter unit with 3 malonyl-CoA units. The downstream nonribosomal peptide synthetase (NRPS) module then amidates the carboxyl end of the polyketide with L-malic acid. Because traA lacks a designated enoylreductase (ER) domain, the required activity is provided the enoyl reductase traG. Crustosic acid undergoes decarboxylation and isomerization to the terrestric acid, catalyzed by the 2-oxoglutarate-dependent dioxygenase traH. Both acids are further converted to the 2 gamma-butyrolactones (R)-5-methyltetronic acid and (S)-5-carboxylmethyltetronic acid, with involvement of the cytochrome P450 monooxygenase claJ. Spontaneous addition of the methide to these gamma-butyrolactones leads to peniphenone D and penilactone D, which undergo again stereospecific attacking by methide to give penilactones A and B. The function of the highly reducing polyketide synthase claI has not been investigated yet. The polypeptide is Highly reducing polyketide synthase claI (Penicillium crustosum (Blue mold fungus)).